Consider the following 348-residue polypeptide: Probable WRKY transcription factor 27 (348 aa).

4 disordered regions span residues 19–52, 67–90, 133–153, and 218–320; these read VSTTNSCAGHEDDIGNCKQQQDPPPPPLFQASSS, TTTTTTTWSPPPLLPPPKASSPSP, LLQQQSQPPLRSRKRKNQQKR, and GEHT…LIPN. The segment covering 75–85 has biased composition (pro residues); it reads SPPPLLPPPKA. A compositionally biased stretch (low complexity) spans 133-142; that stretch reads LLQQQSQPPL. The segment covering 143–153 has biased composition (basic residues); that stretch reads RSRKRKNQQKR. Residues 159-225 constitute a DNA-binding region (WRKY); it reads TQENLSSDLW…YTGEHTHPRP (67 aa). Positions 228–242 are enriched in polar residues; sequence RNSLAGSTRNKSQPV. Positions 274–315 are enriched in acidic residues; that stretch reads DVQETNGDEDMVGQEVNMEEEEEEEEVEEDDEEEEDDDDVDD.

This sequence belongs to the WRKY group II-e family.

Its subcellular location is the nucleus. In terms of biological role, transcription factor. Interacts specifically with the W box (5'-(T)TGAC[CT]-3'), a frequently occurring elicitor-responsive cis-acting element. The chain is Probable WRKY transcription factor 27 (WRKY27) from Arabidopsis thaliana (Mouse-ear cress).